Here is a 149-residue protein sequence, read N- to C-terminus: Cytochrome c-type biogenesis protein CcmE (149 aa).

Residues 1-7 (MKPRHKK) lie on the Cytoplasmic side of the membrane. Residues 8–28 (MAVIALSVSALTVAVVLVLNA) form a helical; Signal-anchor for type II membrane protein membrane-spanning segment. The Periplasmic portion of the chain corresponds to 29–149 (FQSNLVFFFS…AKAQKTSLAQ (121 aa)). 2 residues coordinate heme: H123 and Y127.

This sequence belongs to the CcmE/CycJ family.

The protein localises to the cell inner membrane. Functionally, heme chaperone required for the biogenesis of c-type cytochromes. Transiently binds heme delivered by CcmC and transfers the heme to apo-cytochromes in a process facilitated by CcmF and CcmH. This is Cytochrome c-type biogenesis protein CcmE from Nitrosomonas europaea (strain ATCC 19718 / CIP 103999 / KCTC 2705 / NBRC 14298).